A 297-amino-acid chain; its full sequence is Guanylate kinase (297 aa).

In terms of domain architecture, Guanylate kinase-like spans Gly4–His183. Gly11 to Gly18 serves as a coordination point for ATP. The segment at Glu204–Phe297 is unknown.

This sequence belongs to the guanylate kinase family.

The protein localises to the cytoplasm. The enzyme catalyses GMP + ATP = GDP + ADP. Its function is as follows. Essential for recycling GMP and indirectly, cGMP. The protein is Guanylate kinase (gmk) of Mycoplasma capricolum subsp. capricolum (strain California kid / ATCC 27343 / NCTC 10154).